Consider the following 207-residue polypeptide: Large ribosomal subunit protein bL25 (207 aa).

Belongs to the bacterial ribosomal protein bL25 family. CTC subfamily. Part of the 50S ribosomal subunit; part of the 5S rRNA/L5/L18/L25 subcomplex. Contacts the 5S rRNA. Binds to the 5S rRNA independently of L5 and L18.

Functionally, this is one of the proteins that binds to the 5S RNA in the ribosome where it forms part of the central protuberance. The polypeptide is Large ribosomal subunit protein bL25 (Rhizorhabdus wittichii (strain DSM 6014 / CCUG 31198 / JCM 15750 / NBRC 105917 / EY 4224 / RW1) (Sphingomonas wittichii)).